Reading from the N-terminus, the 524-residue chain is 2-isopropylmalate synthase (524 aa).

The Pyruvate carboxyltransferase domain occupies 15–277 (VVIFDTTMRD…ETKIDTTHIT (263 aa)). The Mn(2+) site is built by Asp-24, His-212, His-214, and Asn-248. Residues 401–524 (RVQRLRVVAG…RPEAAIASGF (124 aa)) are regulatory domain.

Belongs to the alpha-IPM synthase/homocitrate synthase family. LeuA type 1 subfamily. In terms of assembly, homodimer. Requires Mn(2+) as cofactor.

Its subcellular location is the cytoplasm. The catalysed reaction is 3-methyl-2-oxobutanoate + acetyl-CoA + H2O = (2S)-2-isopropylmalate + CoA + H(+). The protein operates within amino-acid biosynthesis; L-leucine biosynthesis; L-leucine from 3-methyl-2-oxobutanoate: step 1/4. Catalyzes the condensation of the acetyl group of acetyl-CoA with 3-methyl-2-oxobutanoate (2-ketoisovalerate) to form 3-carboxy-3-hydroxy-4-methylpentanoate (2-isopropylmalate). The sequence is that of 2-isopropylmalate synthase from Caulobacter sp. (strain K31).